The chain runs to 2126 residues: Phthioceranic/hydroxyphthioceranic acid synthase (2126 aa).

The 424-residue stretch at 24 to 447 folds into the Ketosynthase family 3 (KS3) domain; sequence VTPVAVIGMA…GTNVHAVVEQ (424 aa). Cysteine 196 functions as the Acyl-thioester intermediate; for beta-ketoacyl synthase activity in the catalytic mechanism. Active-site for beta-ketoacyl synthase activity residues include histidine 331 and histidine 367. The tract at residues 449–549 is linker domain (LD); it reads PQTEAQPHAA…VYQPAVGQDD (101 aa). Residues 550-849 form an acyltransferase (AT) region; the sequence is RGPVWLFSGQ…VAALAGMRRE (300 aa). Serine 641 acts as the Acyl-ester intermediate; for acyltransferase activity in catalysis. Positions 909-1191 are dehydratase (DH); it reads STVAVHPLLG…LAVCGLRIGT (283 aa). The tract at residues 914–1032 is N-terminal hotdog fold; that stretch reads HPLLGAHVRL…RRASAVLQQV (119 aa). The PKS/mFAS DH domain maps to 914–1198; the sequence is HPLLGAHVRL…IGTGVSERDK (285 aa). Histidine 947 functions as the Proton acceptor; for dehydratase activity in the catalytic mechanism. The interval 1051–1198 is C-terminal hotdog fold; it reads PCRVDGEDLR…IGTGVSERDK (148 aa). The active-site Proton donor; for dehydratase activity is aspartate 1115. The interval 1227–1398 is pseudo beta-ketoacyl reductase (PsiKR); it reads KWLLISDCAA…SEEDETAWRD (172 aa). Positions 1426-1750 are enoylreductase (ER); sequence SGMRLQIRTP…EHTGKLVLHI (325 aa). Residues 1772–2019 are beta-ketoacyl reductase (KR); that stretch reads GSYIITGGLG…AERSRFFEVF (248 aa). NADP(+) contacts are provided by residues 1780–1783, 1803–1806, 1831–1832, and 1904–1905; these read LGGL, SRTQ, DI, and FS. In terms of domain architecture, Carrier spans 2040–2126; the sequence is DEWPARLRQL…DAPAAALSSQ (87 aa). Serine 2075 bears the O-(pantetheine 4'-phosphoryl)serine mark.

It depends on pantetheine 4'-phosphate as a cofactor.

The catalysed reaction is hexadecanoyl-[(hydroxy)phthioceranic acid synthase] + 7 (S)-methylmalonyl-CoA + 14 NADPH + 21 H(+) = C37-phthioceranyl-[(hydroxy)phthioceranic acid synthase] + 7 CO2 + 14 NADP(+) + 7 CoA + 7 H2O. The enzyme catalyses hexadecanoyl-[(hydroxy)phthioceranic acid synthase] + 8 (S)-methylmalonyl-CoA + 16 NADPH + 24 H(+) = C40-phthioceranyl-[(hydroxy)phthioceranic acid synthase] + 8 CO2 + 16 NADP(+) + 8 CoA + 8 H2O. The protein operates within lipid metabolism; fatty acid biosynthesis. It functions in the pathway glycolipid metabolism; sulfolipid-1 biosynthesis. Involved in sulfolipid-1 biosynthesis. Catalyzes the synthesis of the hepta- and octamethyl phthioceranic and hydroxyphthioceranic acids, the methyl-branched acyl constituents of sulfolipids. This chain is Phthioceranic/hydroxyphthioceranic acid synthase (pks2), found in Mycobacterium bovis (strain ATCC BAA-935 / AF2122/97).